A 465-amino-acid chain; its full sequence is Neutrophil collagenase (465 aa).

The signal sequence occupies residues 1–20 (MFRLKTLPLLIFLHTQLANA). Positions 21–100 (FPVPEHLEEK…CGVPDSGDFL (80 aa)) are cleaved as a propeptide — activation peptide. The N-linked (GlcNAc...) asparagine glycan is linked to asparagine 55. Positions 89–96 (PRCGVPDS) match the Cysteine switch motif. Cysteine 91 is a Zn(2+) binding site. Residue asparagine 112 is glycosylated (N-linked (GlcNAc...) asparagine). Ca(2+) is bound at residue aspartate 157. Histidine 167 and aspartate 169 together coordinate Zn(2+). Ca(2+) is bound by residues aspartate 174, glycine 175, asparagine 177, and isoleucine 179. Histidine 182 serves as a coordination point for Zn(2+). Ca(2+) contacts are provided by glycine 189, glycine 191, and aspartate 193. Position 195 (histidine 195) interacts with Zn(2+). The Ca(2+) site is built by aspartate 197 and glutamate 200. Residue histidine 217 participates in Zn(2+) binding. Glutamate 218 is a catalytic residue. Zn(2+) contacts are provided by histidine 221 and histidine 227. Hemopexin repeat units lie at residues 276-325 (PKAC…WPFL), 326-372 (PNGL…GFPR), 374-420 (VQAI…FPGV), and 421-464 (NCRV…WLNC). Cysteine 279 and cysteine 464 are joined by a disulfide. Aspartate 286 lines the Ca(2+) pocket. 2 residues coordinate Ca(2+): aspartate 378 and aspartate 425.

It belongs to the peptidase M10A family. It depends on Ca(2+) as a cofactor. Requires Zn(2+) as cofactor. In terms of tissue distribution, neutrophils. Expressed in uterus. Low levels in kidney and muscle.

It localises to the cytoplasmic granule. The protein resides in the secreted. Its subcellular location is the extracellular space. It is found in the extracellular matrix. It carries out the reaction Cleavage of interstitial collagens in the triple helical domain. Unlike EC 3.4.24.7, this enzyme cleaves type III collagen more slowly than type I.. Cannot be activated without removal of the activation peptide. Activated by matrilysin. Its function is as follows. Can degrade fibrillar type I, II, and III collagens. May play a role in the degradation of collagen fibers during uterine involution. The protein is Neutrophil collagenase (Mmp8) of Mus musculus (Mouse).